Reading from the N-terminus, the 223-residue chain is N-terminal Xaa-Pro-Lys N-methyltransferase 1 (223 aa).

Residue methionine 1 is modified to N-acetylmethionine. Residue threonine 2 is modified to N-acetylthreonine; in N-terminal Xaa-Pro-Lys N-methyltransferase 1, N-terminally processed. Residues glycine 69, arginine 74, 91–93 (DVT), 119–120 (LQ), and glutamine 135 contribute to the S-adenosyl-L-methionine site.

Belongs to the methyltransferase superfamily. NTM1 family.

It is found in the nucleus. The catalysed reaction is N-terminal L-alanyl-L-prolyl-L-lysyl-[protein] + 3 S-adenosyl-L-methionine = N-terminal N,N,N-trimethyl-L-alanyl-L-prolyl-L-lysyl-[protein] + 3 S-adenosyl-L-homocysteine + 3 H(+). The enzyme catalyses N-terminal L-seryl-L-prolyl-L-lysyl-[protein] + 3 S-adenosyl-L-methionine = N-terminal N,N,N-trimethyl-L-seryl-L-prolyl-L-lysyl-[protein] + 3 S-adenosyl-L-homocysteine + 3 H(+). It catalyses the reaction N-terminal L-prolyl-L-prolyl-L-lysyl-[protein] + 2 S-adenosyl-L-methionine = N-terminal N,N-dimethyl-L-prolyl-L-prolyl-L-lysyl-[protein] + 2 S-adenosyl-L-homocysteine + 2 H(+). Distributive alpha-N-methyltransferase that methylates the N-terminus of target proteins containing the N-terminal motif [Ala/Gly/Pro/Ser]-Pro-Lys when the initiator Met is cleaved. Specifically catalyzes mono-, di- or tri-methylation of the exposed alpha-amino group of the Ala, Gly or Ser residue in the [Ala/Gly/Ser]-Pro-Lys motif and mono- or di-methylation of Pro in the Pro-Pro-Lys motif. Some of the substrates may be primed by NTMT2-mediated monomethylation. Catalyzes the trimethylation of the N-terminal Gly in CENPA (after removal of Met-1). Responsible for the N-terminal methylation of KLHL31, MYL2, MYL3, RB1, RCC1, RPL23A and SET. Required during mitosis for normal bipolar spindle formation and chromosome segregation via its action on RCC1. This is N-terminal Xaa-Pro-Lys N-methyltransferase 1 (NTMT1) from Bos taurus (Bovine).